The following is a 394-amino-acid chain: Elongation factor Tu (394 aa).

Positions 10–204 (KPHVNIGTIG…AVDSYIPQPV (195 aa)) constitute a tr-type G domain. Positions 19–26 (GHVDHGKT) are G1. 19 to 26 (GHVDHGKT) provides a ligand contact to GTP. Mg(2+) is bound at residue threonine 26. A G2 region spans residues 60-64 (GITIS). The interval 81-84 (DCPG) is G3. Residues 81-85 (DCPGH) and 136-139 (NKID) contribute to the GTP site. Positions 136–139 (NKID) are G4. Positions 174–176 (SAL) are G5.

This sequence belongs to the TRAFAC class translation factor GTPase superfamily. Classic translation factor GTPase family. EF-Tu/EF-1A subfamily. As to quaternary structure, monomer.

Its subcellular location is the cytoplasm. The enzyme catalyses GTP + H2O = GDP + phosphate + H(+). Functionally, GTP hydrolase that promotes the GTP-dependent binding of aminoacyl-tRNA to the A-site of ribosomes during protein biosynthesis. This is Elongation factor Tu from Rickettsia peacockii (strain Rustic).